Reading from the N-terminus, the 285-residue chain is Complex I assembly factor TIMMDC1, mitochondrial (285 aa).

A run of 4 helical transmembrane segments spans residues alanine 80 to alanine 100, arginine 137 to tyrosine 159, leucine 165 to leucine 185, and leucine 188 to alanine 208.

The protein belongs to the Tim17/Tim22/Tim23 family. In terms of assembly, associates with the intermediate 315 kDa subcomplex of incompletely assembled complex I. Interacts with TMEM70.

The protein localises to the mitochondrion membrane. Its function is as follows. Chaperone protein involved in the assembly of the mitochondrial NADH:ubiquinone oxidoreductase complex (complex I). Participates in constructing the membrane arm of complex I. In Rattus norvegicus (Rat), this protein is Complex I assembly factor TIMMDC1, mitochondrial.